The sequence spans 276 residues: MKSAIIGYMAVAVAAASCQFTVDSKNYDLSAISGPKSVEYTIETPPSKRKMEFVLDPCASLKQDKKKPADEQCPDNTIVCGLGYILLPKEKDFVLSEVMPFGNGPAPQYQPLKTGPEGTEGLSTSYGNPWGSEKLDIDVNYICSDKEEGPKLENVGLGLNNYYEINWKTPAACINDGSKPKQPVKEPGKTPNDGDDASNGNPSWGWFTWLFIIIVLGVAVYIIGNAWINYDRYGNAGVDLLPHADSLRDVPYLIRDLIAKVVGTFTGSSRTGYSAV.

Residues 1 to 15 (MKSAIIGYMAVAVAA) form the signal peptide. Residues 16–175 (ASCQFTVDSK…NWKTPAACIN (160 aa)) form the MRH domain. The Lumenal portion of the chain corresponds to 16–203 (ASCQFTVDSK…GDDASNGNPS (188 aa)). 3 cysteine pairs are disulfide-bonded: Cys18–Cys58, Cys73–Cys80, and Cys143–Cys173. The segment at 174 to 198 (INDGSKPKQPVKEPGKTPNDGDDAS) is disordered. Residues 204–224 (WGWFTWLFIIIVLGVAVYIIG) traverse the membrane as a helical segment. Residues 225–276 (NAWINYDRYGNAGVDLLPHADSLRDVPYLIRDLIAKVVGTFTGSSRTGYSAV) lie on the Cytoplasmic side of the membrane.

The protein belongs to the ATG27 family.

The protein localises to the cytoplasmic vesicle membrane. It localises to the golgi apparatus membrane. It is found in the mitochondrion membrane. The protein resides in the preautophagosomal structure membrane. Its function is as follows. Effector of VPS34 phosphatidylinositol 3-phosphate kinase signaling. Regulates the cytoplasm to vacuole transport (Cvt) vesicle formation. Plays a role in ATG protein retrieval from the pre-autophagosomal structure (PAS) and is especially required for autophagy-dependent cycling of ATG9. The sequence is that of Autophagy-related protein 27 (ATG27) from Yarrowia lipolytica (strain CLIB 122 / E 150) (Yeast).